A 662-amino-acid polypeptide reads, in one-letter code: uncharacterized protein (662 aa).

Residues S145, E164, W173, D184, and Y190 each coordinate FAD. The segment at 638–662 is disordered; that stretch reads SRLETSGVPREGVQRPGSRLRRRPS.

Belongs to the FAD-binding monooxygenase family. FAD is required as a cofactor.

This is an uncharacterized protein from Sinorhizobium fredii (strain NBRC 101917 / NGR234).